A 457-amino-acid polypeptide reads, in one-letter code: Siroheme synthase (457 aa).

Positions 1-204 are precorrin-2 dehydrogenase /sirohydrochlorin ferrochelatase; that stretch reads MDHLPIFCQL…QDQQAVEETT (204 aa). NAD(+)-binding positions include 22 to 23 and 43 to 44; these read DV and LA. A Phosphoserine modification is found at Ser-128. Residues 216–457 form a uroporphyrinogen-III C-methyltransferase region; it reads GEVVLVGAGP…REKLNWFSNH (242 aa). Position 225 (Pro-225) interacts with S-adenosyl-L-methionine. The Proton acceptor role is filled by Asp-248. Lys-270 (proton donor) is an active-site residue. Residues 301 to 303, Ile-306, 331 to 332, Met-382, and Gly-411 each bind S-adenosyl-L-methionine; these read GGD and TA.

It in the N-terminal section; belongs to the precorrin-2 dehydrogenase / sirohydrochlorin ferrochelatase family. The protein in the C-terminal section; belongs to the precorrin methyltransferase family.

It catalyses the reaction uroporphyrinogen III + 2 S-adenosyl-L-methionine = precorrin-2 + 2 S-adenosyl-L-homocysteine + H(+). The enzyme catalyses precorrin-2 + NAD(+) = sirohydrochlorin + NADH + 2 H(+). The catalysed reaction is siroheme + 2 H(+) = sirohydrochlorin + Fe(2+). It functions in the pathway cofactor biosynthesis; adenosylcobalamin biosynthesis; precorrin-2 from uroporphyrinogen III: step 1/1. Its pathway is cofactor biosynthesis; adenosylcobalamin biosynthesis; sirohydrochlorin from precorrin-2: step 1/1. It participates in porphyrin-containing compound metabolism; siroheme biosynthesis; precorrin-2 from uroporphyrinogen III: step 1/1. The protein operates within porphyrin-containing compound metabolism; siroheme biosynthesis; siroheme from sirohydrochlorin: step 1/1. It functions in the pathway porphyrin-containing compound metabolism; siroheme biosynthesis; sirohydrochlorin from precorrin-2: step 1/1. Its function is as follows. Multifunctional enzyme that catalyzes the SAM-dependent methylations of uroporphyrinogen III at position C-2 and C-7 to form precorrin-2 via precorrin-1. Then it catalyzes the NAD-dependent ring dehydrogenation of precorrin-2 to yield sirohydrochlorin. Finally, it catalyzes the ferrochelation of sirohydrochlorin to yield siroheme. The polypeptide is Siroheme synthase (Enterobacter sp. (strain 638)).